Consider the following 121-residue polypeptide: MVRIESSQPRKQRKARYDAPSHMRSKFLNAPLSATLRETYEKKTIRVIKGDTVKVTRGDHVGEEGIVDGIDTRNVKIIVHGVSSTKVDGTEVPRPIDASKVEITKLKLDDKRRVEKLGGKE.

The segment at 1 to 23 is disordered; that stretch reads MVRIESSQPRKQRKARYDAPSHM.

This sequence belongs to the universal ribosomal protein uL24 family. In terms of assembly, part of the 50S ribosomal subunit.

Its function is as follows. One of two assembly initiator proteins, it binds directly to the 5'-end of the 23S rRNA, where it nucleates assembly of the 50S subunit. Located at the polypeptide exit tunnel on the outside of the subunit. The protein is Large ribosomal subunit protein uL24 of Methanoregula boonei (strain DSM 21154 / JCM 14090 / 6A8).